Reading from the N-terminus, the 156-residue chain is Small ribosomal subunit protein uS7 (156 aa).

This sequence belongs to the universal ribosomal protein uS7 family. Part of the 30S ribosomal subunit. Contacts proteins S9 and S11.

One of the primary rRNA binding proteins, it binds directly to 16S rRNA where it nucleates assembly of the head domain of the 30S subunit. Is located at the subunit interface close to the decoding center, probably blocks exit of the E-site tRNA. The sequence is that of Small ribosomal subunit protein uS7 from Dictyoglomus thermophilum (strain ATCC 35947 / DSM 3960 / H-6-12).